The following is a 377-amino-acid chain: MNNQEYYDRLGVSKDASQDEIKKAYRRMSKKYHPDINKEPGAEEKYKEIQEAYDTLGDEQKRAAYDQYGPAGANGGFGDGSGFSGFDSSGFGGFEDIFSSFFGGGASRNPNAPRQGDDLQYRVNLQFEEAVFGTEKEVHYNREASCHTCNGSGAKPGTSPVTCSKCHGSGVINMDTQTPLGMMRRQVTCDVCHGTGQEIKEPCPTCHGTGHEKQSHKVSVKIPAGVETGQQIRLAGQGEAGFNGGPYGDLFVIINVLKSDKFERDGSTIYYSMDINFVQAALGDTVEVPTVHGNVELAIPAGTQTGKTFRLKGKGAPRLRGNGQGDQHVTVNVVTPTKLNDAQKEALQDFAKASGINPVHPKKKGFFNKVKDAFDEM.

The J domain occupies 5 to 69 (EYYDRLGVSK…QKRAAYDQYG (65 aa)). The CR-type zinc finger occupies 133 to 215 (GTEKEVHYNR…CHGTGHEKQS (83 aa)). Residues Cys146, Cys149, Cys163, Cys166, Cys189, Cys192, Cys203, and Cys206 each coordinate Zn(2+). CXXCXGXG motif repeat units lie at residues 146–153 (CHTCNGSG), 163–170 (CSKCHGSG), 189–196 (CDVCHGTG), and 203–210 (CPTCHGTG).

This sequence belongs to the DnaJ family. In terms of assembly, homodimer. It depends on Zn(2+) as a cofactor.

It is found in the cytoplasm. Its function is as follows. Participates actively in the response to hyperosmotic and heat shock by preventing the aggregation of stress-denatured proteins and by disaggregating proteins, also in an autonomous, DnaK-independent fashion. Unfolded proteins bind initially to DnaJ; upon interaction with the DnaJ-bound protein, DnaK hydrolyzes its bound ATP, resulting in the formation of a stable complex. GrpE releases ADP from DnaK; ATP binding to DnaK triggers the release of the substrate protein, thus completing the reaction cycle. Several rounds of ATP-dependent interactions between DnaJ, DnaK and GrpE are required for fully efficient folding. Also involved, together with DnaK and GrpE, in the DNA replication of plasmids through activation of initiation proteins. The polypeptide is Chaperone protein DnaJ (Streptococcus mutans serotype c (strain ATCC 700610 / UA159)).